A 288-amino-acid polypeptide reads, in one-letter code: ATP synthase gamma chain (288 aa).

It belongs to the ATPase gamma chain family. In terms of assembly, F-type ATPases have 2 components, CF(1) - the catalytic core - and CF(0) - the membrane proton channel. CF(1) has five subunits: alpha(3), beta(3), gamma(1), delta(1), epsilon(1). CF(0) has three main subunits: a, b and c.

It localises to the cell inner membrane. Its function is as follows. Produces ATP from ADP in the presence of a proton gradient across the membrane. The gamma chain is believed to be important in regulating ATPase activity and the flow of protons through the CF(0) complex. The protein is ATP synthase gamma chain of Blochmanniella pennsylvanica (strain BPEN).